The primary structure comprises 497 residues: Actin-binding protein WASF2 (497 aa).

Disordered regions lie at residues 173–203 and 239–436; these read KEKR…KEEW and ENVD…SDAR. The span at 252–263 shows a compositional bias: low complexity; that stretch reads SDSASSPSPSFS. Pro residues-rich tracts occupy residues 298 to 335 and 343 to 403; these read SHPP…PPLP and GTPP…PPLP. The region spanning 435–452 is the WH2 domain; sequence ARSDLLSAIRQGFQLRRV. S473 is modified (phosphoserine).

The protein belongs to the SCAR/WAVE family. Binds actin and the Arp2/3 complex. Interacts with BAIAP2. Component of the WAVE2 complex composed of ABI1, CYFIP1/SRA1, NCKAP1/NAP1 (NCKAP1l/HEM1 in hematopoietic cells) and WASF2/WAVE2. Directly interacts with BRK1. Interacts with human cytomegalovirus protein UL135. Interacts with FNBP1L (via the SH3 domain).

It localises to the cytoplasm. Its subcellular location is the cytoskeleton. It is found in the cell projection. The protein resides in the lamellipodium. The protein localises to the basolateral cell membrane. Functionally, downstream effector molecule involved in the transmission of signals from tyrosine kinase receptors and small GTPases to the actin cytoskeleton. Promotes formation of actin filaments. Part of the WAVE complex that regulates lamellipodia formation. The WAVE complex regulates actin filament reorganization via its interaction with the Arp2/3 complex. This chain is Actin-binding protein WASF2, found in Mus musculus (Mouse).